Consider the following 194-residue polypeptide: A-type ATP synthase subunit E (194 aa).

It belongs to the V-ATPase E subunit family. Has multiple subunits with at least A(3), B(3), C, D, E, F, H, I and proteolipid K(x).

The protein localises to the cell membrane. In terms of biological role, component of the A-type ATP synthase that produces ATP from ADP in the presence of a proton gradient across the membrane. This chain is A-type ATP synthase subunit E, found in Saccharolobus solfataricus (strain ATCC 35092 / DSM 1617 / JCM 11322 / P2) (Sulfolobus solfataricus).